The following is a 348-amino-acid chain: High mobility group protein 20A (348 aa).

Disordered regions lie at residues 1–114 and 181–213; these read MENL…YVRF and SRKA…DTKE. 2 stretches are compositionally biased toward polar residues: residues 34–47 and 56–71; these read SESS…QPVN and SQVQ…TAEN. Residues 72–82 are compositionally biased toward basic and acidic residues; sequence TEQKPEEEQQR. Over residues 83-97 the composition is skewed to basic residues; sequence TKRGGWAKGRKRKKP. Positions 104–172 form a DNA-binding region, HMG box; the sequence is PKSPLTGYVR…RYMRELEQYQ (69 aa). A compositionally biased stretch (basic and acidic residues) spans 183-213; it reads KAQDRQKGKLHRQDGARQPVHDHEKEADTKE. Residues 230–274 adopt a coiled-coil conformation; sequence SKAREAELRQLRKSNMEFEERNAALQKHVESMRTAVEKLEVDVIQ.

It is found in the nucleus. In terms of biological role, plays a role in neuronal differentiation. The sequence is that of High mobility group protein 20A (HMG20A) from Gallus gallus (Chicken).